Here is a 315-residue protein sequence, read N- to C-terminus: Ribosomal protein L11 methyltransferase (315 aa).

S-adenosyl-L-methionine is bound by residues T162, G183, D205, and N248.

This sequence belongs to the methyltransferase superfamily. PrmA family.

The protein resides in the cytoplasm. It catalyses the reaction L-lysyl-[protein] + 3 S-adenosyl-L-methionine = N(6),N(6),N(6)-trimethyl-L-lysyl-[protein] + 3 S-adenosyl-L-homocysteine + 3 H(+). In terms of biological role, methylates ribosomal protein L11. This Enterococcus faecalis (strain ATCC 700802 / V583) protein is Ribosomal protein L11 methyltransferase.